The primary structure comprises 267 residues: MKKILLTNDDGYHAKGIKALEQALEEMAEIYVVAPKHEKSACSQCITITAPLRAEKIKGKEGRHYRIDDGTPSDCVYLAINELFKHVCFDLVISGINLGSNMGEDTIYSGTVAGAIEGTIQGVPSIAISQILSNKNKNTPLSFDLAQKIIQDLVQNIFTNGYPLKGRKLLNVNVPNCSLQEYKGERITPKGYRLYKKEVHKRTDPKNESYFWLGLHPLEWQKRENEDRLSDFDAIASNHVSITPLNLDLTSYDDLKSLESWHEGMLK.

A divalent metal cation is bound by residues Asp-9, Asp-10, Ser-40, and Asn-97.

It belongs to the SurE nucleotidase family. A divalent metal cation is required as a cofactor.

It is found in the cytoplasm. The enzyme catalyses a ribonucleoside 5'-phosphate + H2O = a ribonucleoside + phosphate. Nucleotidase that shows phosphatase activity on nucleoside 5'-monophosphates. This is 5'-nucleotidase SurE from Helicobacter pylori (strain P12).